We begin with the raw amino-acid sequence, 1263 residues long: DNA-directed RNA polymerase subunit beta (1263 aa).

Belongs to the RNA polymerase beta chain family. As to quaternary structure, the RNAP catalytic core consists of 2 alpha, 1 beta, 1 beta' and 1 omega subunit. When a sigma factor is associated with the core the holoenzyme is formed, which can initiate transcription.

The catalysed reaction is RNA(n) + a ribonucleoside 5'-triphosphate = RNA(n+1) + diphosphate. DNA-dependent RNA polymerase catalyzes the transcription of DNA into RNA using the four ribonucleoside triphosphates as substrates. This Thermotoga maritima (strain ATCC 43589 / DSM 3109 / JCM 10099 / NBRC 100826 / MSB8) protein is DNA-directed RNA polymerase subunit beta.